An 876-amino-acid chain; its full sequence is GATOR2 complex protein MIOS (876 aa).

6 WD repeats span residues 59 to 101, 112 to 156, 182 to 222, 224 to 262, 266 to 307, and 400 to 440; these read SDTP…NSKS, KHAR…SPEA, GQND…QKTF, NTKA…KPVF, EQPK…MPFG, and RAQS…KQYT. A C4-type zinc finger spans residues 738 to 784; it reads VSCNFCGKSISYSCSAMPHQGRGFSQYGVSGSPTKSKVTSCPGCRKP. The Zn(2+) site is built by Cys740, Cys743, Cys778, Cys781, Cys791, Cys830, Cys833, His835, His838, His841, Cys852, Cys857, and Cys861. The RING-type; atypical zinc-finger motif lies at 785 to 866; that stretch reads LPRCALCLMN…CTCKCMQLDT (82 aa).

It belongs to the WD repeat mio family. Component of the GATOR2 subcomplex, composed of MIOS, SEC13, SEH1L, WDR24 and WDR59. The GATOR2 complex interacts with CASTOR1 and CASTOR2; the interaction is negatively regulated by arginine. The GATOR2 complex interacts with SESN1, SESN2 and SESN3; the interaction is negatively regulated by amino acids. Interacts with SAR1; the interaction is direct, disrupted by leucine and mediates the interaction of SAR1 with the GATOR2 complex to negatively regulate the TORC1 signaling upon leucine deprivation.

The protein resides in the lysosome membrane. The GATOR2 complex is negatively regulated by the upstream amino acid sensors CASTOR1 and SESN2, which sequester the GATOR2 complex in absence of amino acids. In the presence of abundant amino acids, GATOR2 is released from CASTOR1 and SESN2 and activated. Functionally, as a component of the GATOR2 complex, functions as an activator of the amino acid-sensing branch of the mTORC1 signaling pathway. The GATOR2 complex indirectly activates mTORC1 through the inhibition of the GATOR1 subcomplex. GATOR2 probably acts as an E3 ubiquitin-protein ligase toward GATOR1. In the presence of abundant amino acids, the GATOR2 complex mediates ubiquitination of the NPRL2 core component of the GATOR1 complex, leading to GATOR1 inactivation. In the absence of amino acids, GATOR2 is inhibited, activating the GATOR1 complex. Within the GATOR2 complex, MIOS is required to prevent autoubiquitination of WDR24, the catalytic subunit of the complex. The protein is GATOR2 complex protein MIOS of Danio rerio (Zebrafish).